Reading from the N-terminus, the 396-residue chain is Argininosuccinate synthase (396 aa).

Position 9-17 (9-17 (AYSGGLDTS)) interacts with ATP. Tyrosine 85 serves as a coordination point for L-citrulline. Glycine 115 provides a ligand contact to ATP. Positions 117, 121, and 122 each coordinate L-aspartate. Asparagine 121 is a binding site for L-citrulline. Residues arginine 125, serine 173, glutamate 258, and tyrosine 270 each contribute to the L-citrulline site.

The protein belongs to the argininosuccinate synthase family. Type 1 subfamily. In terms of assembly, homotetramer.

It is found in the cytoplasm. It carries out the reaction L-citrulline + L-aspartate + ATP = 2-(N(omega)-L-arginino)succinate + AMP + diphosphate + H(+). It participates in amino-acid biosynthesis; L-arginine biosynthesis; L-arginine from L-ornithine and carbamoyl phosphate: step 2/3. This chain is Argininosuccinate synthase, found in Streptococcus mutans serotype c (strain ATCC 700610 / UA159).